Here is a 722-residue protein sequence, read N- to C-terminus: Polyribonucleotide nucleotidyltransferase (722 aa).

2 residues coordinate Mg(2+): Asp495 and Asp501. The KH domain occupies 561 to 620 (PRLYVMKINPEKIREVIGKGGETIRSITKDTGCEINIEEDGTITIASVSSEGAEAAKKRI). One can recognise an S1 motif domain in the interval 630 to 700 (GKVYEGTVVK…DRGRIRLSIK (71 aa)).

The protein belongs to the polyribonucleotide nucleotidyltransferase family. The cofactor is Mg(2+).

It is found in the cytoplasm. It catalyses the reaction RNA(n+1) + phosphate = RNA(n) + a ribonucleoside 5'-diphosphate. Functionally, involved in mRNA degradation. Catalyzes the phosphorolysis of single-stranded polyribonucleotides processively in the 3'- to 5'-direction. This is Polyribonucleotide nucleotidyltransferase from Chromobacterium violaceum (strain ATCC 12472 / DSM 30191 / JCM 1249 / CCUG 213 / NBRC 12614 / NCIMB 9131 / NCTC 9757 / MK).